Reading from the N-terminus, the 223-residue chain is ATP-dependent dethiobiotin synthetase BioD (223 aa).

11–16 is an ATP binding site; it reads DIGKTY. Thr15 is a Mg(2+) binding site. Lys36 is an active-site residue. Residue Thr40 participates in substrate binding. ATP contacts are provided by residues Asp50, 110–113, and 174–175; these read EGAG and NN. 2 residues coordinate Mg(2+): Asp50 and Glu110.

Belongs to the dethiobiotin synthetase family. Homodimer. Mg(2+) serves as cofactor.

The protein resides in the cytoplasm. It carries out the reaction (7R,8S)-7,8-diammoniononanoate + CO2 + ATP = (4R,5S)-dethiobiotin + ADP + phosphate + 3 H(+). It participates in cofactor biosynthesis; biotin biosynthesis; biotin from 7,8-diaminononanoate: step 1/2. In terms of biological role, catalyzes a mechanistically unusual reaction, the ATP-dependent insertion of CO2 between the N7 and N8 nitrogen atoms of 7,8-diaminopelargonic acid (DAPA, also called 7,8-diammoniononanoate) to form a ureido ring. This chain is ATP-dependent dethiobiotin synthetase BioD, found in Staphylococcus epidermidis (strain ATCC 35984 / DSM 28319 / BCRC 17069 / CCUG 31568 / BM 3577 / RP62A).